The primary structure comprises 606 residues: Threonine dehydratase 1 biosynthetic, chloroplastic (606 aa).

The residue at position 154 (lysine 154) is an N6-(pyridoxal phosphate)lysine. ACT-like domains are found at residues 432-504 (AVLA…NLTD) and 526-597 (LLCR…MESL).

This sequence belongs to the serine/threonine dehydratase family. Requires pyridoxal 5'-phosphate as cofactor. In terms of tissue distribution, expressed constitutively in all tissues examined including root, stem, petiole, leaf, immature flower bud, unopened flower and opened flower with the highest expression in opened flower and lowest in leaf.

Its subcellular location is the plastid. The protein resides in the chloroplast. The catalysed reaction is L-threonine = 2-oxobutanoate + NH4(+). Its pathway is amino-acid biosynthesis; L-isoleucine biosynthesis; 2-oxobutanoate from L-threonine: step 1/1. Strongly inhibited by 1 mM isoleucine. In terms of biological role, has a housekeeping role in isoleucine biosynthesis. In Solanum lycopersicum (Tomato), this protein is Threonine dehydratase 1 biosynthetic, chloroplastic.